A 227-amino-acid chain; its full sequence is Cytochrome c oxidase subunit 2 (227 aa).

The Mitochondrial intermembrane portion of the chain corresponds to 1–14 (MAHAAQVGLQDATS). The helical transmembrane segment at 15–45 (PIMEELIIFHDHALMIIFLICFLVLYALFLT) threads the bilayer. The Mitochondrial matrix segment spans residues 46–59 (LTTKLTSTNISDAQ). The helical transmembrane segment at 60–87 (EMETVWTILPAIILVLIALPSLRILYMT) threads the bilayer. Topologically, residues 88–227 (DEINDPSFTI…IFEMGPVFTL (140 aa)) are mitochondrial intermembrane. His-161, Cys-196, Glu-198, Cys-200, His-204, and Met-207 together coordinate Cu cation. Position 198 (Glu-198) interacts with Mg(2+).

It belongs to the cytochrome c oxidase subunit 2 family. In terms of assembly, component of the cytochrome c oxidase (complex IV, CIV), a multisubunit enzyme composed of 14 subunits. The complex is composed of a catalytic core of 3 subunits MT-CO1, MT-CO2 and MT-CO3, encoded in the mitochondrial DNA, and 11 supernumerary subunits COX4I, COX5A, COX5B, COX6A, COX6B, COX6C, COX7A, COX7B, COX7C, COX8 and NDUFA4, which are encoded in the nuclear genome. The complex exists as a monomer or a dimer and forms supercomplexes (SCs) in the inner mitochondrial membrane with NADH-ubiquinone oxidoreductase (complex I, CI) and ubiquinol-cytochrome c oxidoreductase (cytochrome b-c1 complex, complex III, CIII), resulting in different assemblies (supercomplex SCI(1)III(2)IV(1) and megacomplex MCI(2)III(2)IV(2)). Found in a complex with TMEM177, COA6, COX18, COX20, SCO1 and SCO2. Interacts with TMEM177 in a COX20-dependent manner. Interacts with COX20. Interacts with COX16. Requires Cu cation as cofactor.

It localises to the mitochondrion inner membrane. The catalysed reaction is 4 Fe(II)-[cytochrome c] + O2 + 8 H(+)(in) = 4 Fe(III)-[cytochrome c] + 2 H2O + 4 H(+)(out). Its function is as follows. Component of the cytochrome c oxidase, the last enzyme in the mitochondrial electron transport chain which drives oxidative phosphorylation. The respiratory chain contains 3 multisubunit complexes succinate dehydrogenase (complex II, CII), ubiquinol-cytochrome c oxidoreductase (cytochrome b-c1 complex, complex III, CIII) and cytochrome c oxidase (complex IV, CIV), that cooperate to transfer electrons derived from NADH and succinate to molecular oxygen, creating an electrochemical gradient over the inner membrane that drives transmembrane transport and the ATP synthase. Cytochrome c oxidase is the component of the respiratory chain that catalyzes the reduction of oxygen to water. Electrons originating from reduced cytochrome c in the intermembrane space (IMS) are transferred via the dinuclear copper A center (CU(A)) of subunit 2 and heme A of subunit 1 to the active site in subunit 1, a binuclear center (BNC) formed by heme A3 and copper B (CU(B)). The BNC reduces molecular oxygen to 2 water molecules using 4 electrons from cytochrome c in the IMS and 4 protons from the mitochondrial matrix. The chain is Cytochrome c oxidase subunit 2 (MT-CO2) from Gorilla gorilla beringei (Mountain gorilla).